We begin with the raw amino-acid sequence, 218 residues long: Thiopurine S-methyltransferase (218 aa).

Positions 10, 45, 66, and 123 each coordinate S-adenosyl-L-methionine.

Belongs to the class I-like SAM-binding methyltransferase superfamily. TPMT family.

It is found in the cytoplasm. It catalyses the reaction S-adenosyl-L-methionine + a thiopurine = S-adenosyl-L-homocysteine + a thiopurine S-methylether.. This chain is Thiopurine S-methyltransferase, found in Shewanella baltica (strain OS195).